The sequence spans 565 residues: MATYIQRVQCISALLSVVLTTLVSCQIPRDRLSNIGVIVDEGKSLKIAGSHESRYIVLSLVPGVDLENGCGTAQVIQYKSLLNRLLIPLRDALDLQEALITVTNDTMTSADVPQSRFFGAVIGTIALGVATSAQITAGIALAEAREAKRDIALIKESMTKTHKSIELLQNAVGEQILALKTLQDFVNDEIKPAISELGCETAALRLGIKLTQHYSELLTAFGSNFGTIGEKSLTLQALSSLYSANITEIMTTIRTGQSNIYDVIYTEQIKGTVIDVDLERYMVTLSVKIPILSEVPGVLIHKASSISYNIDGEEWYVTVPSHILSRASFLGGANIADCVESRLTYICPRDPAQLIPDSQQKCILGDTTRCPVTKVVDNLIPKFAFVNGGVVANCIASTCTCGTGRRPISQDRSKGVVFLTHDNCGLIGVNGIELYANRKGHDATWGVQNLTVGPAIAIRPVDISLNLAAATDFLQDSRAELEKARKILSEVGRWYNSGATLITIIVVMIVVLVVIIVIVIVLYRLRRSMLMSNPAGRISRDTYTLEPKIRHMYTNGGFDAMTEKR.

Residues 1 to 25 (MATYIQRVQCISALLSVVLTTLVSC) form the signal peptide. The Extracellular portion of the chain corresponds to 26–500 (QIPRDRLSNI…VGRWYNSGAT (475 aa)). An intrachain disulfide couples C70 to C199. Residue N104 is glycosylated (N-linked (GlcNAc...) asparagine; by host). A fusion peptide region spans residues 117–141 (FFGAVIGTIALGVATSAQITAGIAL). Residues 142–170 (AEAREAKRDIALIKESMTKTHKSIELLQN) are a coiled coil. N245 carries N-linked (GlcNAc...) asparagine; by host glycosylation. Positions 269–307 (IKGTVIDVDLERYMVTLSVKIPILSEVPGVLIHKASSIS) are leucine-zipper. Cystine bridges form between C338/C347, C362/C370, C394/C399, and C401/C424. An N-linked (GlcNAc...) asparagine; by host glycan is attached at N449. The stretch at 466 to 491 (NLAAATDFLQDSRAELEKARKILSEV) forms a coiled coil. The chain crosses the membrane as a helical span at residues 501–521 (LITIIVVMIVVLVVIIVIVIV). At 522-565 (LYRLRRSMLMSNPAGRISRDTYTLEPKIRHMYTNGGFDAMTEKR) the chain is on the cytoplasmic side.

This sequence belongs to the paramyxoviruses fusion glycoprotein family. In terms of assembly, homotrimer of disulfide-linked F1-F2. Interacts with HN and M proteins. In terms of processing, in natural infection, inactive F0 is matured into F1 and F2 outside the cell by one or more trypsin-like, arginine-specific endoprotease secreted by the bronchial epithelial cells. One identified protease that may be involved in this process is tryptase Clara. Unlike most paramyxoviruses, Sendai F0 processing occurs on the cell surface and induces a conformational change in the protein that unmasks the fusion peptide. F0 maturation is a primary determinant for organ tropism and pathogenicity. F1 and F2 display interchain and intrachain disulfide bonds, that are necessary for correct folding and intracellular transport. N-glycosylated; glycans consist of a mixture of high mannose-type oligosaccharides and of complex-type oligosaccharides. Glycosylation at Asn-245 is essential for membrane localization and F0 cleavage.

It localises to the virion membrane. The protein resides in the host cell membrane. Its function is as follows. Class I viral fusion protein. Under the current model, the protein has at least 3 conformational states: pre-fusion native state, pre-hairpin intermediate state, and post-fusion hairpin state. During viral and plasma cell membrane fusion, the heptad repeat (HR) regions assume a trimer-of-hairpins structure, positioning the fusion peptide in close proximity to the C-terminal region of the ectodomain. The formation of this structure appears to drive apposition and subsequent fusion of viral and plasma cell membranes. Directs fusion of viral and cellular membranes leading to delivery of the nucleocapsid into the cytoplasm. This fusion is pH independent and occurs directly at the outer cell membrane. The trimer of F1-F2 (F protein) interacts with HN tetramer at the virion surface. Upon HN binding to its cellular receptor, the hydrophobic fusion peptide is unmasked and interacts with the cellular membrane, inducing the fusion between cell and virion membranes. Later in infection, F proteins expressed at the plasma membrane of infected cells could mediate fusion with adjacent cells to form syncytia, a cytopathic effect that could lead to tissue necrosis. The polypeptide is Fusion glycoprotein F0 (F) (Sendai virus (strain Hamamatsu) (SeV)).